Here is a 336-residue protein sequence, read N- to C-terminus: Dihydroorotate dehydrogenase (quinone) (336 aa).

FMN contacts are provided by residues 62 to 66 and Thr86; that span reads AGLDK. Residue Lys66 participates in substrate binding. A substrate-binding site is contributed by 111–115; that stretch reads NRMGF. FMN is bound by residues Asn139 and Asn172. Asn172 is a substrate binding site. The Nucleophile role is filled by Ser175. Asn177 serves as a coordination point for substrate. FMN-binding residues include Lys217 and Thr245. Position 246–247 (246–247) interacts with substrate; sequence NT. FMN contacts are provided by residues Gly268, Gly297, and 318–319; that span reads YS.

It belongs to the dihydroorotate dehydrogenase family. Type 2 subfamily. In terms of assembly, monomer. Requires FMN as cofactor.

The protein resides in the cell membrane. The enzyme catalyses (S)-dihydroorotate + a quinone = orotate + a quinol. The protein operates within pyrimidine metabolism; UMP biosynthesis via de novo pathway; orotate from (S)-dihydroorotate (quinone route): step 1/1. In terms of biological role, catalyzes the conversion of dihydroorotate to orotate with quinone as electron acceptor. This Escherichia coli O17:K52:H18 (strain UMN026 / ExPEC) protein is Dihydroorotate dehydrogenase (quinone).